We begin with the raw amino-acid sequence, 456 residues long: GTPase Der (456 aa).

2 EngA-type G domains span residues 3-167 (FTIA…PPSD) and 185-360 (IRVA…AVWN). GTP is bound by residues 9–16 (GRPNVGKS), 56–60 (DTAGL), and 119–122 (NKSE). The segment at 162–181 (IVPPSDDEDDEREETDEERA) is disordered. Residues 166-178 (SDDEDDEREETDE) show a composition bias toward acidic residues. GTP is bound by residues 191-198 (GRPNAGKS), 238-242 (DTAGL), and 303-306 (NKWD). Residues 361–445 (RRVPTAALNR…PVRITLREKA (85 aa)) enclose the KH-like domain.

It belongs to the TRAFAC class TrmE-Era-EngA-EngB-Septin-like GTPase superfamily. EngA (Der) GTPase family. Associates with the 50S ribosomal subunit.

In terms of biological role, GTPase that plays an essential role in the late steps of ribosome biogenesis. The sequence is that of GTPase Der from Bradyrhizobium sp. (strain ORS 278).